The primary structure comprises 216 residues: Probable transaldolase (216 aa).

The active-site Schiff-base intermediate with substrate is the Lys-84.

The protein belongs to the transaldolase family. Type 3B subfamily.

It localises to the cytoplasm. The enzyme catalyses D-sedoheptulose 7-phosphate + D-glyceraldehyde 3-phosphate = D-erythrose 4-phosphate + beta-D-fructose 6-phosphate. It functions in the pathway carbohydrate degradation; pentose phosphate pathway; D-glyceraldehyde 3-phosphate and beta-D-fructose 6-phosphate from D-ribose 5-phosphate and D-xylulose 5-phosphate (non-oxidative stage): step 2/3. Functionally, transaldolase is important for the balance of metabolites in the pentose-phosphate pathway. The sequence is that of Probable transaldolase from Lysinibacillus sphaericus (strain C3-41).